A 316-amino-acid chain; its full sequence is tRNA-cytidine(32) 2-sulfurtransferase (316 aa).

A disordered region spans residues 1-31; that stretch reads MGAVIDDSMPGPGADATGTGPSDARTERETR. Residues 10–21 show a composition bias toward low complexity; the sequence is PGPGADATGTGP. Residues 62-67 carry the PP-loop motif motif; the sequence is SGGKDS. The [4Fe-4S] cluster site is built by C137, C140, and C228.

The protein belongs to the TtcA family. Homodimer. Mg(2+) is required as a cofactor. Requires [4Fe-4S] cluster as cofactor.

The protein resides in the cytoplasm. The catalysed reaction is cytidine(32) in tRNA + S-sulfanyl-L-cysteinyl-[cysteine desulfurase] + AH2 + ATP = 2-thiocytidine(32) in tRNA + L-cysteinyl-[cysteine desulfurase] + A + AMP + diphosphate + H(+). The protein operates within tRNA modification. Functionally, catalyzes the ATP-dependent 2-thiolation of cytidine in position 32 of tRNA, to form 2-thiocytidine (s(2)C32). The sulfur atoms are provided by the cysteine/cysteine desulfurase (IscS) system. The chain is tRNA-cytidine(32) 2-sulfurtransferase from Verminephrobacter eiseniae (strain EF01-2).